A 206-amino-acid chain; its full sequence is Nucleoside triphosphate pyrophosphatase (206 aa).

Catalysis depends on Asp71, which acts as the Proton acceptor.

This sequence belongs to the Maf family. Requires a divalent metal cation as cofactor.

The protein resides in the cytoplasm. It carries out the reaction a ribonucleoside 5'-triphosphate + H2O = a ribonucleoside 5'-phosphate + diphosphate + H(+). It catalyses the reaction a 2'-deoxyribonucleoside 5'-triphosphate + H2O = a 2'-deoxyribonucleoside 5'-phosphate + diphosphate + H(+). Nucleoside triphosphate pyrophosphatase. May have a dual role in cell division arrest and in preventing the incorporation of modified nucleotides into cellular nucleic acids. The sequence is that of Nucleoside triphosphate pyrophosphatase from Rippkaea orientalis (strain PCC 8801 / RF-1) (Cyanothece sp. (strain PCC 8801)).